The primary structure comprises 179 residues: ATP synthase subunit delta (179 aa).

The protein belongs to the ATPase delta chain family. As to quaternary structure, F-type ATPases have 2 components, F(1) - the catalytic core - and F(0) - the membrane proton channel. F(1) has five subunits: alpha(3), beta(3), gamma(1), delta(1), epsilon(1). F(0) has three main subunits: a(1), b(2) and c(10-14). The alpha and beta chains form an alternating ring which encloses part of the gamma chain. F(1) is attached to F(0) by a central stalk formed by the gamma and epsilon chains, while a peripheral stalk is formed by the delta and b chains.

It is found in the cell inner membrane. F(1)F(0) ATP synthase produces ATP from ADP in the presence of a proton or sodium gradient. F-type ATPases consist of two structural domains, F(1) containing the extramembraneous catalytic core and F(0) containing the membrane proton channel, linked together by a central stalk and a peripheral stalk. During catalysis, ATP synthesis in the catalytic domain of F(1) is coupled via a rotary mechanism of the central stalk subunits to proton translocation. In terms of biological role, this protein is part of the stalk that links CF(0) to CF(1). It either transmits conformational changes from CF(0) to CF(1) or is implicated in proton conduction. This Burkholderia vietnamiensis (strain G4 / LMG 22486) (Burkholderia cepacia (strain R1808)) protein is ATP synthase subunit delta.